The following is a 502-amino-acid chain: Cobyric acid synthase (502 aa).

In terms of domain architecture, GATase cobBQ-type spans 260-433; it reads ILRVAVCAIP…WHGSLESDGF (174 aa). Residue C341 is the Nucleophile of the active site. H425 is a catalytic residue.

The protein belongs to the CobB/CobQ family. CobQ subfamily.

It participates in cofactor biosynthesis; adenosylcobalamin biosynthesis. Its function is as follows. Catalyzes amidations at positions B, D, E, and G on adenosylcobyrinic A,C-diamide. NH(2) groups are provided by glutamine, and one molecule of ATP is hydrogenolyzed for each amidation. The sequence is that of Cobyric acid synthase from Streptomyces avermitilis (strain ATCC 31267 / DSM 46492 / JCM 5070 / NBRC 14893 / NCIMB 12804 / NRRL 8165 / MA-4680).